Consider the following 729-residue polypeptide: 1,4-alpha-glucan branching enzyme GlgB 2 (729 aa).

Catalysis depends on Asp408, which acts as the Nucleophile. Glu461 (proton donor) is an active-site residue.

It belongs to the glycosyl hydrolase 13 family. GlgB subfamily. Monomer.

It catalyses the reaction Transfers a segment of a (1-&gt;4)-alpha-D-glucan chain to a primary hydroxy group in a similar glucan chain.. Its pathway is glycan biosynthesis; glycogen biosynthesis. Catalyzes the formation of the alpha-1,6-glucosidic linkages in glycogen by scission of a 1,4-alpha-linked oligosaccharide from growing alpha-1,4-glucan chains and the subsequent attachment of the oligosaccharide to the alpha-1,6 position. The polypeptide is 1,4-alpha-glucan branching enzyme GlgB 2 (Xanthomonas campestris pv. campestris (strain 8004)).